A 258-amino-acid polypeptide reads, in one-letter code: Regulatory protein RecX (258 aa).

It belongs to the RecX family.

It localises to the cytoplasm. Functionally, modulates RecA activity. The polypeptide is Regulatory protein RecX (Streptococcus uberis (strain ATCC BAA-854 / 0140J)).